Reading from the N-terminus, the 91-residue chain is Small ribosomal subunit protein uS19 (91 aa).

It belongs to the universal ribosomal protein uS19 family.

Functionally, protein S19 forms a complex with S13 that binds strongly to the 16S ribosomal RNA. The chain is Small ribosomal subunit protein uS19 from Pseudomonas fluorescens (strain Pf0-1).